Reading from the N-terminus, the 61-residue chain is Protein translocase subunit SecE (61 aa).

Residues 38-58 traverse the membrane as a helical segment; sequence GIGMILIGTIGMIIRIIGYLV.

The protein belongs to the SecE/SEC61-gamma family. In terms of assembly, component of the Sec protein translocase complex. Heterotrimer consisting of SecY (alpha), SecG (beta) and SecE (gamma) subunits. The heterotrimers can form oligomers, although 1 heterotrimer is thought to be able to translocate proteins. Interacts with the ribosome. May interact with SecDF, and other proteins may be involved.

It is found in the cell membrane. Essential subunit of the Sec protein translocation channel SecYEG. Clamps together the 2 halves of SecY. May contact the channel plug during translocation. The sequence is that of Protein translocase subunit SecE from Thermococcus kodakarensis (strain ATCC BAA-918 / JCM 12380 / KOD1) (Pyrococcus kodakaraensis (strain KOD1)).